A 235-amino-acid chain; its full sequence is MFFIHKLFPAKLIRRYKRFLADVKREDQHIFTVSVPNTGSMLGLTTPNSNIWLSYHNNPKRRYAYQLEIVEANNTLVGINTTLPNKLALEAIQNNLLPELNGYKTILKEQRYGIQSRIDFLLRDDILPDCYLEIKNVHFIRQKGLAEFPDTETKRGTRHLEELIKIVQQGKRAVMLYIIQREDCSAFTICRDLDPTYGRKFDLALESGVEFYAIKCQVSVEGIFPIQQVKIENRK.

This sequence belongs to the SfsA family.

The polypeptide is Sugar fermentation stimulation protein homolog (Bartonella henselae (strain ATCC 49882 / DSM 28221 / CCUG 30454 / Houston 1) (Rochalimaea henselae)).